The primary structure comprises 268 residues: (+)-cis,trans-nepetalactol synthase NEPS2 (268 aa).

NAD(+) contacts are provided by residues 16–22 (GGASGIG), 41–43 (DIQ), 65–66 (DI), asparagine 92, 163–167 (YVMSK), and 196–200 (VLTPL).

This sequence belongs to the short-chain dehydrogenases/reductases (SDR) family.

The enzyme catalyses (S)-8-oxocitronellyl enol = cis-trans-nepetalactol. Functionally, functions as a non-oxidoreductive cyclase to promote the formation of cis-trans-nepetalactol. Cis-trans-nepetalactol is then oxidized by NEPS1 into cis-trans-nepetalactone, which belongs to a family of metabolites that are both insect-repellent and have euphoric effect in cats. Binds NAD(+) as classical short-chain dehydrogenase/reductase (SDR), but does not utilize it for its redox-neutral cyclase activity. The sequence is that of (+)-cis,trans-nepetalactol synthase NEPS2 from Nepeta racemosa (Catmint).